We begin with the raw amino-acid sequence, 125 residues long: Large ribosomal subunit protein bL17 (125 aa).

It belongs to the bacterial ribosomal protein bL17 family. As to quaternary structure, part of the 50S ribosomal subunit. Contacts protein L32.

This is Large ribosomal subunit protein bL17 from Blochmanniella pennsylvanica (strain BPEN).